The following is a 453-amino-acid chain: Membrane-bound acylglycerophosphatidylinositol O-acyltransferase mboa-7 (453 aa).

A run of 7 helical transmembrane segments spans residues Ile4–Gly24, Ile36–Val56, Leu79–Leu99, Ala154–Ile174, Val195–Ile215, Ala220–Phe240, and Val244–Pro264. The N-linked (GlcNAc...) asparagine glycan is linked to Asn319. Residue His350 is part of the active site. The next 2 helical transmembrane spans lie at Ala354–Phe374 and Phe421–Ala441.

Belongs to the membrane-bound acyltransferase family. In terms of tissue distribution, expressed ubiquitously throughout development from early embryo to larval and adult stages. In adults, strongly expressed in pharyngeal muscle, body wall muscle, vulval cells, distal tip cells, intestinal cells and spermatheca.

The protein localises to the membrane. It catalyses the reaction 1-octadecanoyl-sn-glycero-3-phospho-(1D-myo-inositol) + (5Z,8Z,11Z,14Z,17Z)-eicosapentaenoyl-CoA = 1-octadecanoyl-2-(5Z,8Z,11Z,14Z,17Z-eicosapentaenoyl)-sn-glycero-3-phospho-(1D-myo-inositol) + CoA. The enzyme catalyses a 1-acyl-sn-glycero-3-phospho-(1D-myo-inositol) + (5Z,8Z,11Z,14Z,17Z)-eicosapentaenoyl-CoA = a 1-acyl-2-(5Z,8Z,11Z,14Z,17Z-eicosapentaenoyl)-sn-glycero-3-phospho-(1D-myo-inositol) + CoA. It carries out the reaction a 1-acyl-sn-glycero-3-phospho-(1D-myo-inositol) + (5Z,8Z,11Z,14Z)-eicosatetraenoyl-CoA = a 1-acyl-2-(5Z,8Z,11Z,14Z-eicosatetraenoyl)-sn-glycero-3-phospho-(1D-myo-inositol) + CoA. It functions in the pathway lipid metabolism; phospholipid metabolism. Its function is as follows. Acyltransferase which mediates the conversion of lysophosphatidylinositol (1-acyl-sn-glycero-3-phosphatidylinositol or LPI) into phosphatidylinositol (1,2-diacyl-sn-glycero-3-phosphoinositol or PI) (LPIAT activity). Prefers sn-2-LPI rather than sn-1-LPI as the acyl acceptor. Lysophospholipid acyltransferases (LPLATs) catalyze the reacylation step of the phospholipid remodeling pathway also known as the Lands cycle. Involved in the selective incorporation of arachidonoyl-CoA ((5Z,8Z,11Z,14Z)-eicosatetraenoyl-CoA) and (5Z,8Z,11Z,14Z,17Z)-eicosapentaenoyl-CoA (EPA-CoA) into PI. Besides its role in biomembranes, PI is a precursor of PI 3-phosphate (PIP3) and its fatty acid composition has an important role in PI3P signaling. The chain is Membrane-bound acylglycerophosphatidylinositol O-acyltransferase mboa-7 from Caenorhabditis elegans.